We begin with the raw amino-acid sequence, 348 residues long: Putative [LysW]-L-2-aminoadipate/[LysW]-L-glutamate phosphate reductase (348 aa).

Residue 9–12 (SGYV) participates in NADP(+) binding. The active site involves C149. N315 contributes to the NADP(+) binding site.

It belongs to the NAGSA dehydrogenase family. Type 1 subfamily. LysY sub-subfamily.

The protein resides in the cytoplasm. It carries out the reaction [amino-group carrier protein]-C-terminal-N-(1-carboxy-5-oxopentan-1-yl)-L-glutamine + phosphate + NADP(+) = [amino-group carrier protein]-C-terminal-N-(1-carboxy-5-phosphooxy-5-oxopentan-1-yl)-L-glutamine + NADPH + H(+). It catalyses the reaction [amino-group carrier protein]-C-terminal-gamma-(L-glutamyl-5-semialdehyde)-L-glutamate + phosphate + NADP(+) = [amino-group carrier protein]-C-terminal-gamma-(5-phospho-L-glutamyl)-L-glutamate + NADPH + H(+). It functions in the pathway amino-acid biosynthesis; L-lysine biosynthesis via AAA pathway; L-lysine from L-alpha-aminoadipate (Thermus route): step 3/5. It participates in amino-acid biosynthesis; L-arginine biosynthesis. In terms of biological role, involved in both the arginine and lysine biosynthetic pathways. This Nitrosopumilus maritimus (strain SCM1) protein is Putative [LysW]-L-2-aminoadipate/[LysW]-L-glutamate phosphate reductase.